The primary structure comprises 668 residues: DNA ligase (668 aa).

NAD(+) is bound by residues 34–38 (DTEYD), 83–84 (SL), and Glu114. The active-site N6-AMP-lysine intermediate is Lys116. Residues Arg137, Glu171, Lys286, and Lys310 each coordinate NAD(+). 4 residues coordinate Zn(2+): Cys404, Cys407, Cys422, and Cys427. One can recognise a BRCT domain in the interval 588–668 (NSDSIIANKS…FFDLLKSEKG (81 aa)).

The protein belongs to the NAD-dependent DNA ligase family. LigA subfamily. It depends on Mg(2+) as a cofactor. Mn(2+) serves as cofactor.

The enzyme catalyses NAD(+) + (deoxyribonucleotide)n-3'-hydroxyl + 5'-phospho-(deoxyribonucleotide)m = (deoxyribonucleotide)n+m + AMP + beta-nicotinamide D-nucleotide.. Its function is as follows. DNA ligase that catalyzes the formation of phosphodiester linkages between 5'-phosphoryl and 3'-hydroxyl groups in double-stranded DNA using NAD as a coenzyme and as the energy source for the reaction. It is essential for DNA replication and repair of damaged DNA. In Mycoplasma mycoides subsp. mycoides SC (strain CCUG 32753 / NCTC 10114 / PG1), this protein is DNA ligase.